The sequence spans 116 residues: Large ribosomal subunit protein uL24 (116 aa).

It belongs to the universal ribosomal protein uL24 family. As to quaternary structure, part of the 50S ribosomal subunit.

In terms of biological role, one of two assembly initiator proteins, it binds directly to the 5'-end of the 23S rRNA, where it nucleates assembly of the 50S subunit. Located at the polypeptide exit tunnel on the outside of the subunit. In Methanothrix thermoacetophila (strain DSM 6194 / JCM 14653 / NBRC 101360 / PT) (Methanosaeta thermophila), this protein is Large ribosomal subunit protein uL24.